We begin with the raw amino-acid sequence, 21 residues long: Venom nerve growth factor Bco12 (21 aa).

It belongs to the NGF-beta family. As to quaternary structure, homodimer; non-covalently linked. In terms of processing, glycosylated. In terms of tissue distribution, expressed by the venom gland.

The protein localises to the secreted. In terms of biological role, nerve growth factor is important for the development and maintenance of the sympathetic and sensory nervous systems. It stimulates division and differentiation of sympathetic and embryonic sensory neurons as well as basal forebrain cholinergic neurons in the brain. Its relevance in the snake venom is not clear. However, it has been shown to inhibit metalloproteinase-dependent proteolysis of platelet glycoprotein Ib alpha, suggesting a metalloproteinase inhibition to prevent metalloprotease autodigestion and/or protection against prey proteases. Binds a lipid between the two protein chains in the homodimer. The lipid-bound form promotes histamine relase from mouse mast cells, contrary to the lipid-free form. In Bothrops cotiara (Cotiara), this protein is Venom nerve growth factor Bco12.